The following is a 20-amino-acid chain: Cytochrome c oxidase subunit 5B heart, mitochondrial (20 aa).

The disordered stretch occupies residues 1–20 (XXLKGIPTDEEQATGLEEYA).

This sequence belongs to the cytochrome c oxidase subunit 5B family. As to quaternary structure, component of the cytochrome c oxidase (complex IV, CIV), a multisubunit enzyme composed of 14 subunits. The complex is composed of a catalytic core of 3 subunits MT-CO1, MT-CO2 and MT-CO3, encoded in the mitochondrial DNA, and 11 supernumerary subunits COX4I, COX5A, COX5B, COX6A, COX6B, COX6C, COX7A, COX7B, COX7C, COX8 and NDUFA4, which are encoded in the nuclear genome. The complex exists as a monomer or a dimer and forms supercomplexes (SCs) in the inner mitochondrial membrane with NADH-ubiquinone oxidoreductase (complex I, CI) and ubiquinol-cytochrome c oxidoreductase (cytochrome b-c1 complex, complex III, CIII), resulting in different assemblies (supercomplex SCI(1)III(2)IV(1) and megacomplex MCI(2)III(2)IV(2)).

The protein resides in the mitochondrion inner membrane. The protein operates within energy metabolism; oxidative phosphorylation. In terms of biological role, component of the cytochrome c oxidase, the last enzyme in the mitochondrial electron transport chain which drives oxidative phosphorylation. The respiratory chain contains 3 multisubunit complexes succinate dehydrogenase (complex II, CII), ubiquinol-cytochrome c oxidoreductase (cytochrome b-c1 complex, complex III, CIII) and cytochrome c oxidase (complex IV, CIV), that cooperate to transfer electrons derived from NADH and succinate to molecular oxygen, creating an electrochemical gradient over the inner membrane that drives transmembrane transport and the ATP synthase. Cytochrome c oxidase is the component of the respiratory chain that catalyzes the reduction of oxygen to water. Electrons originating from reduced cytochrome c in the intermembrane space (IMS) are transferred via the dinuclear copper A center (CU(A)) of subunit 2 and heme A of subunit 1 to the active site in subunit 1, a binuclear center (BNC) formed by heme A3 and copper B (CU(B)). The BNC reduces molecular oxygen to 2 water molecules using 4 electrons from cytochrome c in the IMS and 4 protons from the mitochondrial matrix. This chain is Cytochrome c oxidase subunit 5B heart, mitochondrial, found in Oncorhynchus mykiss (Rainbow trout).